Consider the following 409-residue polypeptide: Elongation factor Tu (409 aa).

The 205-residue stretch at 10–214 folds into the tr-type G domain; that stretch reads KPHLNIGTIG…AVDSFIPTPE (205 aa). The tract at residues 19 to 26 is G1; it reads GHVDHGKT. 19–26 provides a ligand contact to GTP; the sequence is GHVDHGKT. A Mg(2+)-binding site is contributed by Thr-26. The segment at 60–64 is G2; the sequence is GITIN. The interval 81–84 is G3; the sequence is DCPG. GTP is bound by residues 81–85 and 136–139; these read DCPGH and NKED. Positions 136-139 are G4; it reads NKED. The interval 174-176 is G5; that stretch reads SGL.

This sequence belongs to the TRAFAC class translation factor GTPase superfamily. Classic translation factor GTPase family. EF-Tu/EF-1A subfamily. Monomer.

It is found in the cytoplasm. It carries out the reaction GTP + H2O = GDP + phosphate + H(+). In terms of biological role, GTP hydrolase that promotes the GTP-dependent binding of aminoacyl-tRNA to the A-site of ribosomes during protein biosynthesis. The protein is Elongation factor Tu of Nostoc punctiforme (strain ATCC 29133 / PCC 73102).